The chain runs to 527 residues: G patch domain-containing protein 2 (527 aa).

Positions 35–135 (LEESSEQARG…RPSSNLSSSV (101 aa)) are disordered. Residues 62–76 (RQARKRRGRKRRSYN) show a composition bias toward basic residues. Basic and acidic residues predominate over residues 97–116 (EPSKDYREKHSNNKKDRSDS). 3 positions are modified to phosphoserine: Ser114, Ser116, and Ser145. Disordered regions lie at residues 175–281 (SSKR…GDDE), 350–375 (TPSK…GSNK), and 480–527 (TPGS…GNPA). Over residues 186–196 (GCRDQDMDNDR) the composition is skewed to basic and acidic residues. A compositionally biased stretch (basic residues) spans 206–215 (KKVKKRKLKG). The segment covering 231-257 (SEERSQPNKDRMEYEEQKASDELRSES) has biased composition (basic and acidic residues). One can recognise a G-patch domain in the interval 466 to 512 (ESNIGNRMLQSMGWTPGSGLGRDGRGIAEPVQAVQRPKGLGLGFPLP). The segment covering 510–527 (PLPKSSPTSPAPTSGNPA) has biased composition (low complexity).

Interacts with DHX15.

The protein resides in the nucleus speckle. Its subcellular location is the nucleus. It localises to the nucleolus. Enhances the ATPase activity of DHX15 in vitro. The sequence is that of G patch domain-containing protein 2 (Gpatch2) from Mus musculus (Mouse).